The chain runs to 335 residues: MIGLAVTTTKKIAKWKVDEVAELTEKLKTHKTIIIANIEGFPADKLHEIRKKLRGKADIKVTKNNLFNIALKNAGYDTKLFESYLTGPNAFIFTDTNPFELQLFLSKFKLKRYALPGDKADEEVVVPAGDTGIAAGPMLSVFGKLKIKTKVQDGKIHILQDTTVAKPGDEIPADIVPILQKLGIMPVYVKLNIKIAYDNGVIIPGDKLSINLDDYTNEIRKAHINAFAVATEIAYPEPKVLEFTATKAMRNALALASEIGYITQETAQAVFTKAVMKAYAVASSISGKVDLGVQIQAQPQVSEQAAEKKEEKKEEEKKGPSEEEIGGGLSSLFGG.

A disordered region spans residues 300 to 335 (QVSEQAAEKKEEKKEEEKKGPSEEEIGGGLSSLFGG). The segment covering 305–321 (AAEKKEEKKEEEKKGPS) has biased composition (basic and acidic residues). A compositionally biased stretch (gly residues) spans 326–335 (GGGLSSLFGG).

The protein belongs to the universal ribosomal protein uL10 family. Part of the 50S ribosomal subunit. Forms part of the ribosomal stalk which helps the ribosome interact with GTP-bound translation factors. Forms a heptameric L10(L12)2(L12)2(L12)2 complex, where L10 forms an elongated spine to which the L12 dimers bind in a sequential fashion.

Functionally, forms part of the ribosomal stalk, playing a central role in the interaction of the ribosome with GTP-bound translation factors. The protein is Large ribosomal subunit protein uL10 of Sulfolobus acidocaldarius (strain ATCC 33909 / DSM 639 / JCM 8929 / NBRC 15157 / NCIMB 11770).